Consider the following 1159-residue polypeptide: Anillin-like protein 1 (1159 aa).

Disordered stretches follow at residues 43–81 (VASP…MKEN), 266–327 (QQVS…TKTT), 409–430 (KLKK…APVP), 549–608 (AIPK…GDVI), and 629–699 (FGFM…KSSS). The segment covering 50–60 (FGSSSKCNDGP) has biased composition (polar residues). Residues 287–327 (ASSATSSSSSTTTLTTISGASGSTTSGISNAPQDSASTKTT) are compositionally biased toward low complexity. The span at 421–430 (PPAPTSAPVP) shows a compositional bias: pro residues. Polar residues predominate over residues 564 to 584 (SASSLYSQGARSNTASPASKS). Acidic residues predominate over residues 660-684 (VIEEETENEDESEPYEPEEEEDDDA). In terms of domain architecture, PH spans 1029-1147 (DITYHGFLSM…WLSLINSTSK (119 aa)).

In terms of tissue distribution, strongly expressed in dividing neuroblasts under the ventral epidermal cells during ventral enclosure.

The protein resides in the cytoplasm. It is found in the cell cortex. Its subcellular location is the cytoskeleton. The protein localises to the spindle. It localises to the midbody. The protein resides in the cleavage furrow. Functionally, required for contractile events in embryos that occur prior to mitosis, such as cortical ruffling and pseudocleavage. Promotes membrane ruffling by organizing cortical patches of septins and myosin II. Not generally required for cytokinesis in mitotic cells. Required for the asymmetric cleavage events that extrude the two polar bodies during oocyte meiosis. Not required for meiotic contractile ring assembly, initiation or closure but is required for the transformation of the contractile ring from a disk above the spindle to a tube around the spindle midzone. Promotes astral microtubule-directed cortical myosin polarization and cleavage furrow ingression. Regulates neuroblast cytokinesis during mid- to late-embryogenesis and is required for ventral enclosure. In Caenorhabditis elegans, this protein is Anillin-like protein 1 (ani-1).